A 140-amino-acid polypeptide reads, in one-letter code: Nuclear receptor 2C2-associated protein (140 aa).

The protein belongs to the NR2C2AP family. In terms of assembly, interacts with NR2C2/TR4.

The protein resides in the nucleus. Functionally, may act as a repressor of NR2C2-mediated transactivation by suppressing the binding between NR2C2/TR4 and the TR4-response element in target genes. This Bos taurus (Bovine) protein is Nuclear receptor 2C2-associated protein (NR2C2AP).